The sequence spans 563 residues: Arginine--tRNA ligase (563 aa).

The 'HIGH' region motif lies at 122–132; that stretch reads PNIAKPISMGH.

It belongs to the class-I aminoacyl-tRNA synthetase family. Monomer.

The protein resides in the cytoplasm. The enzyme catalyses tRNA(Arg) + L-arginine + ATP = L-arginyl-tRNA(Arg) + AMP + diphosphate. This Latilactobacillus sakei subsp. sakei (strain 23K) (Lactobacillus sakei subsp. sakei) protein is Arginine--tRNA ligase.